Reading from the N-terminus, the 216-residue chain is Cobalt-zinc-cadmium resistance protein CzcN (216 aa).

Helical transmembrane passes span 27–47, 50–70, and 116–136; these read IGVWRVVVTFVLASLLFGHSR, GTWVSPLLLTLGMLGVSLATV, and ESLAVTAVLALAFALMYPAVI.

The protein to A.xylosoxydans NccN.

It is found in the cell inner membrane. In terms of biological role, component of the CZC cation-efflux system that confers resistance to cobalt, zinc and cadmium. This Cupriavidus metallidurans (strain ATCC 43123 / DSM 2839 / NBRC 102507 / CH34) (Ralstonia metallidurans) protein is Cobalt-zinc-cadmium resistance protein CzcN (czcN).